A 381-amino-acid chain; its full sequence is Chaperone protein DnaJ (381 aa).

Residues 5-70 enclose the J domain; the sequence is DFYEVLGVSR…QKKAAYDQYG (66 aa). The segment at 136 to 214 adopts a CR-type zinc-finger fold; it reads GVTKEIEVPT…CHGQGRKQKT (79 aa). Zn(2+)-binding residues include cysteine 149, cysteine 152, cysteine 166, cysteine 169, cysteine 188, cysteine 191, cysteine 202, and cysteine 205. CXXCXGXG motif repeat units follow at residues 149-156, 166-173, 188-195, and 202-209; these read CDSCDGSG, CGTCHGHG, CPTCHGKG, and CNECHGQG.

This sequence belongs to the DnaJ family. Homodimer. Requires Zn(2+) as cofactor.

It is found in the cytoplasm. Participates actively in the response to hyperosmotic and heat shock by preventing the aggregation of stress-denatured proteins and by disaggregating proteins, also in an autonomous, DnaK-independent fashion. Unfolded proteins bind initially to DnaJ; upon interaction with the DnaJ-bound protein, DnaK hydrolyzes its bound ATP, resulting in the formation of a stable complex. GrpE releases ADP from DnaK; ATP binding to DnaK triggers the release of the substrate protein, thus completing the reaction cycle. Several rounds of ATP-dependent interactions between DnaJ, DnaK and GrpE are required for fully efficient folding. Also involved, together with DnaK and GrpE, in the DNA replication of plasmids through activation of initiation proteins. The protein is Chaperone protein DnaJ of Vibrio parahaemolyticus serotype O3:K6 (strain RIMD 2210633).